We begin with the raw amino-acid sequence, 117 residues long: Large ribosomal subunit protein bL19 (117 aa).

Belongs to the bacterial ribosomal protein bL19 family.

This protein is located at the 30S-50S ribosomal subunit interface and may play a role in the structure and function of the aminoacyl-tRNA binding site. This Bacteroides thetaiotaomicron (strain ATCC 29148 / DSM 2079 / JCM 5827 / CCUG 10774 / NCTC 10582 / VPI-5482 / E50) protein is Large ribosomal subunit protein bL19.